Consider the following 76-residue polypeptide: Large ribosomal subunit protein uL29 (76 aa).

The protein belongs to the universal ribosomal protein uL29 family.

The sequence is that of Large ribosomal subunit protein uL29 from Corynebacterium aurimucosum (strain ATCC 700975 / DSM 44827 / CIP 107346 / CN-1) (Corynebacterium nigricans).